Here is a 60-residue protein sequence, read N- to C-terminus: Large ribosomal subunit protein bL32 (60 aa).

The interval 1 to 21 (MAVPARHTSKAKKNKRRTHYK) is disordered. The span at 7–20 (HTSKAKKNKRRTHY) shows a compositional bias: basic residues.

Belongs to the bacterial ribosomal protein bL32 family.

The polypeptide is Large ribosomal subunit protein bL32 (Streptococcus equi subsp. zooepidemicus (strain H70)).